A 304-amino-acid polypeptide reads, in one-letter code: E3 ubiquitin-protein ligase CCNB1IP1 homolog (304 aa).

An RING-type; degenerate zinc finger spans residues 3 to 42 (CNACWRDLEGRAISTTCGHLLCTEDASKILSNDGACPICD). The stretch at 124–184 (TAYQKMGKRC…YESVKRTAIQ (61 aa)) forms a coiled coil. The disordered stretch occupies residues 218-279 (SFFSPATPGP…GGGGTANPQS (62 aa)). The span at 235–250 (RQNSSNSGPFDISTDS) shows a compositional bias: polar residues.

Expressed mostly in flower buds and roots.

It is found in the nucleus. It localises to the chromosome. It carries out the reaction S-ubiquitinyl-[E2 ubiquitin-conjugating enzyme]-L-cysteine + [acceptor protein]-L-lysine = [E2 ubiquitin-conjugating enzyme]-L-cysteine + N(6)-ubiquitinyl-[acceptor protein]-L-lysine.. The protein operates within protein modification; protein ubiquitination. Ubiquitin E3 ligase required for class I crossover (CO) formation during meiosis. The protein is E3 ubiquitin-protein ligase CCNB1IP1 homolog (HEI10) of Arabidopsis thaliana (Mouse-ear cress).